A 600-amino-acid chain; its full sequence is NADH-quinone oxidoreductase subunit C/D (600 aa).

Residues Met-1–Gln-190 are NADH dehydrogenase I subunit C. Residues Asp-214 to Arg-600 are NADH dehydrogenase I subunit D.

In the N-terminal section; belongs to the complex I 30 kDa subunit family. The protein in the C-terminal section; belongs to the complex I 49 kDa subunit family. In terms of assembly, NDH-1 is composed of 13 different subunits. Subunits NuoB, CD, E, F, and G constitute the peripheral sector of the complex.

Its subcellular location is the cell inner membrane. The enzyme catalyses a quinone + NADH + 5 H(+)(in) = a quinol + NAD(+) + 4 H(+)(out). NDH-1 shuttles electrons from NADH, via FMN and iron-sulfur (Fe-S) centers, to quinones in the respiratory chain. The immediate electron acceptor for the enzyme in this species is believed to be ubiquinone. Couples the redox reaction to proton translocation (for every two electrons transferred, four hydrogen ions are translocated across the cytoplasmic membrane), and thus conserves the redox energy in a proton gradient. This is NADH-quinone oxidoreductase subunit C/D from Escherichia coli O127:H6 (strain E2348/69 / EPEC).